We begin with the raw amino-acid sequence, 1090 residues long: DNA damage-binding protein 1 (1090 aa).

The protein belongs to the DDB1 family. Component of the UV-DDB complex, which is composed of DDB1 and DDB2. In terms of tissue distribution, expressed in proliferating tissues. Highly expressed in shoot apical meristem (SAM). Expressed in roots, young leaves, flag leaves, and panicles. Not detected in mature leaves.

The protein resides in the nucleus. Its function is as follows. Required for DNA repair. Binds to DDB2 to form the UV-damaged DNA-binding protein complex (the UV-DDB complex). The UV-DDB complex may recognize UV-induced DNA damage and recruit proteins of the nucleotide excision repair pathway (the NER pathway) to initiate DNA repair. May function as the substrate recognition module for a DCX (DDB1-CUL4-X-box) E3 ubiquitin-protein ligase complex. This is DNA damage-binding protein 1 from Oryza sativa subsp. japonica (Rice).